A 418-amino-acid polypeptide reads, in one-letter code: Light-independent protochlorophyllide reductase subunit N (418 aa).

3 residues coordinate [4Fe-4S] cluster: Cys-17, Cys-42, and Cys-103.

It belongs to the BchN/ChlN family. Protochlorophyllide reductase is composed of three subunits; ChlL, ChlN and ChlB. Forms a heterotetramer of two ChlB and two ChlN subunits. [4Fe-4S] cluster is required as a cofactor.

It catalyses the reaction chlorophyllide a + oxidized 2[4Fe-4S]-[ferredoxin] + 2 ADP + 2 phosphate = protochlorophyllide a + reduced 2[4Fe-4S]-[ferredoxin] + 2 ATP + 2 H2O. Its pathway is porphyrin-containing compound metabolism; chlorophyll biosynthesis (light-independent). Its function is as follows. Component of the dark-operative protochlorophyllide reductase (DPOR) that uses Mg-ATP and reduced ferredoxin to reduce ring D of protochlorophyllide (Pchlide) to form chlorophyllide a (Chlide). This reaction is light-independent. The NB-protein (ChlN-ChlB) is the catalytic component of the complex. The chain is Light-independent protochlorophyllide reductase subunit N from Prochlorococcus marinus (strain SARG / CCMP1375 / SS120).